A 411-amino-acid chain; its full sequence is Trigger factor (411 aa).

Residues 162–240 (EDLVVIDYTT…IKEVKRRQNI (79 aa)) enclose the PPIase FKBP-type domain.

This sequence belongs to the FKBP-type PPIase family. Tig subfamily.

It localises to the cytoplasm. It catalyses the reaction [protein]-peptidylproline (omega=180) = [protein]-peptidylproline (omega=0). Involved in protein export. Acts as a chaperone by maintaining the newly synthesized protein in an open conformation. Functions as a peptidyl-prolyl cis-trans isomerase. This is Trigger factor from Thermodesulfovibrio yellowstonii (strain ATCC 51303 / DSM 11347 / YP87).